Reading from the N-terminus, the 81-residue chain is Small ribosomal subunit protein bS20 (81 aa).

The span at 1–11 (MPNIKSQKKRV) shows a compositional bias: basic residues. Residues 1–20 (MPNIKSQKKRVLTNEKSRAS) form a disordered region.

It belongs to the bacterial ribosomal protein bS20 family.

Functionally, binds directly to 16S ribosomal RNA. This is Small ribosomal subunit protein bS20 from Mesoplasma florum (strain ATCC 33453 / NBRC 100688 / NCTC 11704 / L1) (Acholeplasma florum).